The sequence spans 331 residues: Flagellar P-ring protein (331 aa).

An N-terminal signal peptide occupies residues 1-22 (MRKVTIFIIIIVALTGFGSVRI).

The protein belongs to the FlgI family. The basal body constitutes a major portion of the flagellar organelle and consists of four rings (L,P,S, and M) mounted on a central rod.

The protein localises to the periplasm. It is found in the bacterial flagellum basal body. Assembles around the rod to form the L-ring and probably protects the motor/basal body from shearing forces during rotation. The sequence is that of Flagellar P-ring protein from Pseudothermotoga lettingae (strain ATCC BAA-301 / DSM 14385 / NBRC 107922 / TMO) (Thermotoga lettingae).